The primary structure comprises 580 residues: CRISPR-associated exonuclease Cas4/endonuclease Cas1 fusion (580 aa).

Residues 1–223 (MAPSDTPPSA…RCSLLPICLP (223 aa)) are CRISPR-associated exonuclease Cas4. Residue cysteine 44 coordinates [4Fe-4S] cluster. Mn(2+) contacts are provided by aspartate 112 and glutamate 125. [4Fe-4S] cluster-binding residues include cysteine 212, cysteine 215, and cysteine 221. Positions 248–580 (LYGQTPGARI…IPRYPHYCPR (333 aa)) are CRISPR-associated endonuclease Cas1. The Mn(2+) site is built by glutamate 401, histidine 472, and glutamate 487.

The protein in the N-terminal section; belongs to the CRISPR-associated exonuclease Cas4 family. In the C-terminal section; belongs to the CRISPR-associated endonuclease Cas1 family. Homodimer, forms a heterotetramer with a Cas2 homodimer. [4Fe-4S] cluster serves as cofactor. Requires Mg(2+) as cofactor. The cofactor is Mn(2+).

The catalysed reaction is exonucleolytic cleavage in the 5'- to 3'-direction to yield nucleoside 3'-phosphates.. In terms of biological role, CRISPR (clustered regularly interspaced short palindromic repeat), is an adaptive immune system that provides protection against mobile genetic elements (viruses, transposable elements and conjugative plasmids). CRISPR clusters contain spacers, sequences complementary to antecedent mobile elements, and target invading nucleic acids. CRISPR clusters are transcribed and processed into CRISPR RNA (crRNA). The Cas4 region acts as a ssDNA exonuclease, while the Cas1 region acts as a dsDNA endonuclease. Involved in the integration of spacer DNA into the CRISPR cassette. This is CRISPR-associated exonuclease Cas4/endonuclease Cas1 fusion (cas4-cas1) from Rhodospirillum rubrum (strain ATCC 11170 / ATH 1.1.1 / DSM 467 / LMG 4362 / NCIMB 8255 / S1).